The primary structure comprises 849 residues: Period circadian protein (849 aa).

The segment covering 1–13 has biased composition (polar residues); that stretch reads MNNMDGSENNAKV. Positions 1–79 are disordered; sequence MNNMDGSENN…LKKKKQVETL (79 aa). Low complexity-rich tracts occupy residues 14–27 and 35–58; these read SDSA…NSQS and STHS…SSSS. Residues 63–74 carry the Nuclear localization signal motif; that stretch reads DQKKEKELKKKK. PAS domains follow at residues 166-296 and 314-416; these read NGFS…QAVP and FVIR…YIIE. Residues 680–746 are disordered; sequence NNTPSVYEKP…VSTSSQWSSS (67 aa). The span at 706–720 shows a compositional bias: basic residues; the sequence is NKHHCPSSRQFRRKQ. Over residues 735-746 the composition is skewed to low complexity; sequence NPVSTSSQWSSS.

Forms a heterodimer with timeless (TIM); the complex then translocates into the nucleus. Post-translationally, phosphorylated with a circadian rhythmicity.

Its subcellular location is the nucleus. Involved in the generation of biological rhythms. The biological cycle depends on the rhythmic formation and nuclear localization of the tim-per complex. Light induces the degradation of tim, which promotes elimination of per. Nuclear activity of the heterodimer coordinatively regulates per and tim transcription negative feedback loop. Behaves as a negative element in circadian transcriptional loop. Does not appear to bind DNA, suggesting indirect transcriptional inhibition. Expression exhibits prominent circadian variation in adult heads and in particular in the photoreceptor nuclei. The sequence is that of Period circadian protein (per) from Antheraea pernyi (Chinese oak silk moth).